The following is a 367-amino-acid chain: Alginate lyase (367 aa).

An N-terminal signal peptide occupies residues 1-24; it reads MTLLKRISSPALLALALFGGAAHA. Residues 63-64, 136-137, and Y254 contribute to the substrate site; these read SK and HT.

Belongs to the polysaccharide lyase 5 family.

Its subcellular location is the periplasm. It carries out the reaction Eliminative cleavage of alginate to give oligosaccharides with 4-deoxy-alpha-L-erythro-hex-4-enuronosyl groups at their non-reducing ends and beta-D-mannuronate at their reducing end.. In terms of biological role, catalyzes the depolymerization of alginate by cleaving the beta-1,4 glycosidic bond between two adjacent sugar residues via a beta-elimination mechanism. May serve to degrade mislocalized alginate that is trapped in the periplasmic space. The polypeptide is Alginate lyase (Pseudomonas putida (strain GB-1)).